Consider the following 501-residue polypeptide: Ectoine/hydroxyectoine transporter (501 aa).

Transmembrane regions (helical) follow at residues 9 to 29 (PVFY…ATLP), 45 to 65 (IHFG…LITL), 86 to 106 (FFTW…VFWG), 137 to 157 (AFFH…LVIA), 190 to 210 (LAVI…ILQM), 220 to 240 (VPTS…TYLI), 258 to 278 (LGSL…VFIL), 311 to 331 (WTIF…AFIA), 343 to 363 (VLGV…AFGG), 395 to 415 (LPMT…FLVT), 441 to 461 (IVWG…GGLE), and 465 to 485 (TASL…MASF).

It belongs to the BCCT transporter (TC 2.A.15) family.

The protein localises to the cell inner membrane. Its function is as follows. Mediates the import of ectoine and hydroxyectoine, which function as osmotic and cold stress protectants. Also has minor uptake activities for the compatible solutes proline and glycine betaine. This chain is Ectoine/hydroxyectoine transporter, found in Virgibacillus pantothenticus.